The chain runs to 862 residues: Axin-1 (862 aa).

Residues 1–78 are disordered; sequence MNIQEQGFPL…GYEPEGSASP (78 aa). The Tankyrase-binding motif motif lies at 20–29; sequence APRPPVPGEE. Phosphoserine; by CK1 is present on residues serine 75 and serine 77. The RGS domain maps to 88-211; that stretch reads SLHSLLDDQD…LKSDIYLEYT (124 aa). Residues 209 to 338 are interaction with TP53; it reads EYTRTGSESP…DADTLSLTDS (130 aa). Disordered stretches follow at residues 215 to 289 and 316 to 344; these read SESP…YSEG and TSANDSEQQSLSSDADTLSLTDSSVDGIP. Residue serine 217 is modified to Phosphoserine; by CK1. Acidic residues predominate over residues 242 to 258; the sequence is NEDEEWKCDQDMDEDDG. Residues 325-339 show a composition bias toward low complexity; that stretch reads SLSSDADTLSLTDSS. The segment at 348–433 is interaction with GSK3B; it reads IRKQHRREMQ…DGDPSSGPPG (86 aa). Residues 353–411 form an interaction with SIAH1 and SIAH2 region; that stretch reads RREMQESVQVNGRVPLPHIPRTYRVPKEVRVEPQKFAEELIHRLEAVQRTREAEEKLEE. The disordered stretch occupies residues 413-441; it reads LKRVRMEEEGEDGDPSSGPPGPCHKLPPA. Pro residues predominate over residues 429–441; the sequence is SGPPGPCHKLPPA. The interaction with CTNNB1 stretch occupies residues 434–502; the sequence is PCHKLPPAPA…SPDSGHVAKM (69 aa). Serine 469 carries the phosphoserine; by CK1 modification. Positions 480-500 are disordered; sequence RTPGRQSPGPGHRSPDSGHVA. At threonine 481 the chain carries Phosphothreonine; by GSK3-beta. 3 positions are modified to phosphoserine: serine 486, serine 493, and serine 511. The segment at 507 to 757 is interaction with RNF111; that stretch reads GGAASGHGKH…PVLHVVPAVS (251 aa). Over residues 531 to 544 the composition is skewed to basic residues; it reads HHRHVHHHVHHSTA. 2 disordered regions span residues 531–629 and 641–679; these read HHRH…AEKN and KEISRHRRTGHGSSGTRKPQPHENSRPLSLEHPWAGPQL. Over residues 545–556 the composition is skewed to basic and acidic residues; sequence RPKEQVEAEATR. Residues 575–789 are interaction with PPP2CA; the sequence is SRGYSESVGA…CDSIVVAYYF (215 aa). Position 581 is a phosphoserine (serine 581). Residues 677-752 are interaction with HIPK2; the sequence is PQLRTSVQPS…RPACAPVLHV (76 aa). Residues 780-862 enclose the DIX domain; it reads CDSIVVAYYF…KIIGKVEKVD (83 aa). Glycyl lysine isopeptide (Lys-Gly) (interchain with G-Cter in SUMO) cross-links involve residues lysine 857 and lysine 860.

Homodimer. Interacts with ZBED3; the interaction is direct, enhanced by protein kinase GSK3B and casein kinase CSNK1E activities and decreases GSK3B-induced beta-catenin serine and threonine phosphorylations. Component of the beta-catenin destruction complex, containing at least, CTNNB1, an axin and GSK3B, that regulates CTNNB1 protein levels through phosphorylation and ubiquitination. Interacts with CTNNB1 (via the armadillo repeats 2-7). Interacts with GSK3B; the interaction hyperphosphorylates CTNNB1 leading to its ubiquitination and destruction. Component of the AXIN1-HIPK2-TP53 complex. Interacts directly in the complex with TP53 and HIPK2. Interacts with DAXX; the interaction stimulates the interaction of DAXX with TP53, stimulates 'Ser-46' phosphorylation of TP53 and induces cell death on UV irradiation. Also binds APC, SMAD6, SMAD7 and RNF111. Interacts with DIXDC1; prevents interaction with MAP3K1. Interacts with MAP3K4. Interacts with ANKRD6 and AIDA. Interacts with MDFI; the interaction decreases AXIN1-mediated JUN N-terminal kinase (JNK) activation. Interacts with MDFIC; the interaction inhibits beta-cateninin-mediated signaling and AXIN1-mediated JUN N-terminal kinase (JNK) activation. Interacts with LRP5 (via its phosphorylated PPPSP motifs); the interaction is stimulated by WNT1 and GSK3B and activates beta-catenin signaling. Interacts (via the C-terminal) with PPP1CA; the interaction dephosphorylates AXIN1 and regulates interaction with GSK3B. Interacts with PPP2CA; the interaction dephosphorylates AXIN1. Interacts with MACF1. Found in a complex composed of MACF1, APC, AXIN1, CTNNB1 and GSK3B. Interacts with TNKS. Interacts with DAB2; the interaction is mutually exclusive with the AXIN1:PPP1CA interaction. Interacts with WDR26. Interacts with GID8. Interacts with SIAH1 and SIAH2; both probably catalyze AXIN1 ubiquitination and subsequent proteasome-mediated ubiquitin-dependent degradation. Interaction with GSK3B and AXIN1 is competitive. Post-translationally, phosphorylation and dephosphorylation of AXIN1 regulates assembly and function of the beta-catenin complex. Phosphorylated by CK1 and GSK3B. Dephosphorylated by PPP1CA and PPP2CA. Phosphorylation by CK1 enhances binding of GSK3B to AXIN1. ADP-ribosylated by tankyrase TNKS and TNKS2. Poly-ADP-ribosylated protein is recognized by RNF146, followed by ubiquitination at 'Lys-48' and subsequent activation of the Wnt signaling pathway. In terms of processing, ubiquitinated by RNF146 when poly-ADP-ribosylated, leading to its degradation and subsequent activation of the Wnt signaling pathway. Sumoylation at Lys-857 and Lys-860 prevents ubiquitination and degradation. Sumoylation is required for AXIN1-mediated JNK activation. Deubiquitinated by USP34, deubiquitinated downstream of beta-catenin stabilization step: deubiquitination is important for nuclear accumulation during Wnt signaling to positively regulate beta-catenin (CTNBB1)-mediated transcription. Ubiquitination by SIAH1 and SIAH2 induces its proteasomal degradation as part of the activation of the Wnt signaling pathway. Ubiquitously expressed.

It localises to the cytoplasm. The protein localises to the nucleus. Its subcellular location is the membrane. The protein resides in the cell membrane. Component of the beta-catenin destruction complex required for regulating CTNNB1 levels through phosphorylation and ubiquitination, and modulating Wnt-signaling. Controls dorsoventral patterning via two opposing effects; down-regulates CTNNB1 to inhibit the Wnt signaling pathway and ventralize embryos, but also dorsalizes embryos by activating a Wnt-independent JNK signaling pathway. In Wnt signaling, probably facilitates the phosphorylation of CTNNB1 and APC by GSK3B. Likely to function as a tumor suppressor. Enhances TGF-beta signaling by recruiting the RNF111 E3 ubiquitin ligase and promoting the degradation of inhibitory SMAD7. Also a component of the AXIN1-HIPK2-TP53 complex which controls cell growth, apoptosis and development. Facilitates the phosphorylation of TP53 by HIPK2 upon ultraviolet irradiation. This is Axin-1 (AXIN1) from Homo sapiens (Human).